The chain runs to 128 residues: Holo-[acyl-carrier-protein] synthase (128 aa).

Mg(2+) is bound by residues aspartate 9 and glutamate 60.

This sequence belongs to the P-Pant transferase superfamily. AcpS family. Mg(2+) serves as cofactor.

Its subcellular location is the cytoplasm. It carries out the reaction apo-[ACP] + CoA = holo-[ACP] + adenosine 3',5'-bisphosphate + H(+). Functionally, transfers the 4'-phosphopantetheine moiety from coenzyme A to a Ser of acyl-carrier-protein. The sequence is that of Holo-[acyl-carrier-protein] synthase from Buchnera aphidicola subsp. Baizongia pistaciae (strain Bp).